The chain runs to 147 residues: UPF0216 protein MK1676 (147 aa).

This sequence belongs to the UPF0216 family.

In Methanopyrus kandleri (strain AV19 / DSM 6324 / JCM 9639 / NBRC 100938), this protein is UPF0216 protein MK1676.